A 131-amino-acid chain; its full sequence is DNA-binding protein inhibitor ID-4 (131 aa).

Residues 36 to 88 (ARYKMEEEETLCLQYDMNDCYSRLKRLVPTIPPNKKVSKVEILQHVIDYILDL) form the bHLH domain.

Heterodimer with other HLH proteins. In terms of tissue distribution, during embryonic development, expressed in a number of neural tissues, including Rohon-Beard neurons, olfactory placode, eye primordia, and the trigeminal ganglia. Also expressed in other organs including the pronephros and liver primordium. Pronephric development begins by stage 25 and increases during tailbud stages. Expressed in both the tubules and the duct. As embryogenesis progresses, expressed in the migrating melanocytes and lateral line structures.

It is found in the nucleus. Transcriptional regulator (lacking a basic DNA binding domain) which negatively regulates the basic helix-loop-helix (bHLH) transcription factors by forming heterodimers and inhibiting their DNA binding and transcriptional activity. Inhibits the activity of both neurogenic (neurog1/neurogenin, neurod1/neuroD) and myogenic (myod1/myoD) bHLH factors. This Xenopus laevis (African clawed frog) protein is DNA-binding protein inhibitor ID-4.